Reading from the N-terminus, the 775-residue chain is 5-methyltetrahydropteroyltriglutamate--homocysteine methyltransferase (775 aa).

5-methyltetrahydropteroyltri-L-glutamate is bound by residues 16 to 19 (REMK) and K115. L-homocysteine is bound by residues 435–437 (IGS) and E488. L-methionine is bound by residues 435–437 (IGS) and E488. 5-methyltetrahydropteroyltri-L-glutamate is bound by residues 519-520 (RC) and W565. D603 lines the L-homocysteine pocket. D603 is an L-methionine binding site. E609 provides a ligand contact to 5-methyltetrahydropteroyltri-L-glutamate. Residues H645, C647, and E669 each coordinate Zn(2+). Residue H698 is the Proton donor of the active site. C730 is a binding site for Zn(2+).

Belongs to the vitamin-B12 independent methionine synthase family. Zn(2+) is required as a cofactor.

It catalyses the reaction 5-methyltetrahydropteroyltri-L-glutamate + L-homocysteine = tetrahydropteroyltri-L-glutamate + L-methionine. It participates in amino-acid biosynthesis; L-methionine biosynthesis via de novo pathway; L-methionine from L-homocysteine (MetE route): step 1/1. Its function is as follows. Catalyzes the transfer of a methyl group from 5-methyltetrahydrofolate to homocysteine resulting in methionine formation. The chain is 5-methyltetrahydropteroyltriglutamate--homocysteine methyltransferase from Coxiella burnetii (strain Dugway 5J108-111).